Reading from the N-terminus, the 428-residue chain is Glucose-1-phosphate adenylyltransferase (428 aa).

Residues Tyr99, Gly164, Glu179–Lys180, and Ser190 contribute to the alpha-D-glucose 1-phosphate site.

The protein belongs to the bacterial/plant glucose-1-phosphate adenylyltransferase family. As to quaternary structure, homotetramer.

It catalyses the reaction alpha-D-glucose 1-phosphate + ATP + H(+) = ADP-alpha-D-glucose + diphosphate. The protein operates within glycan biosynthesis; glycogen biosynthesis. Functionally, involved in the biosynthesis of ADP-glucose, a building block required for the elongation reactions to produce glycogen. Catalyzes the reaction between ATP and alpha-D-glucose 1-phosphate (G1P) to produce pyrophosphate and ADP-Glc. This is Glucose-1-phosphate adenylyltransferase from Thermomicrobium roseum (strain ATCC 27502 / DSM 5159 / P-2).